The primary structure comprises 87 residues: UPF0250 protein plu1293 (87 aa).

Belongs to the UPF0250 family.

In Photorhabdus laumondii subsp. laumondii (strain DSM 15139 / CIP 105565 / TT01) (Photorhabdus luminescens subsp. laumondii), this protein is UPF0250 protein plu1293.